Here is a 345-residue protein sequence, read N- to C-terminus: Biotin synthase (345 aa).

In terms of domain architecture, Radical SAM core spans 60-287 (NQVQLSTLLS…RTMVRLSAGR (228 aa)). 3 residues coordinate [4Fe-4S] cluster: cysteine 75, cysteine 79, and cysteine 82. Residues cysteine 119, cysteine 150, cysteine 210, and arginine 282 each coordinate [2Fe-2S] cluster.

It belongs to the radical SAM superfamily. Biotin synthase family. Homodimer. [4Fe-4S] cluster serves as cofactor. [2Fe-2S] cluster is required as a cofactor.

The catalysed reaction is (4R,5S)-dethiobiotin + (sulfur carrier)-SH + 2 reduced [2Fe-2S]-[ferredoxin] + 2 S-adenosyl-L-methionine = (sulfur carrier)-H + biotin + 2 5'-deoxyadenosine + 2 L-methionine + 2 oxidized [2Fe-2S]-[ferredoxin]. The protein operates within cofactor biosynthesis; biotin biosynthesis; biotin from 7,8-diaminononanoate: step 2/2. In terms of biological role, catalyzes the conversion of dethiobiotin (DTB) to biotin by the insertion of a sulfur atom into dethiobiotin via a radical-based mechanism. The chain is Biotin synthase from Polaromonas naphthalenivorans (strain CJ2).